The chain runs to 176 residues: WASH complex subunit 3 (176 aa).

Residues 47 to 74 (ETKFVEMERQLQKTEAALIILEAKLASI) are a coiled coil. 2 disordered regions span residues 84–123 (ATEAPAISNQQRNEEASMVDTTEPPTTENPTEPELPPESV) and 152–176 (KMQSEGLEPRILDTPDLILADGQRE). Residues 104–115 (TTEPPTTENPTE) show a composition bias toward low complexity.

Belongs to the CCDC53 family. As to quaternary structure, component of the WASH complex.

The protein localises to the early endosome. In terms of biological role, acts at least in part as component of the WASH complex which may regulate wash nucleation-promoting factor (NPF) activity and is required for its membrane targeting during endosomal sorting. During embryogenesis, not involved in the wash-dependent developmental migration of hemocytes anteriorly from the tail. This Drosophila melanogaster (Fruit fly) protein is WASH complex subunit 3.